A 117-amino-acid chain; its full sequence is Immunoglobulin lambda variable 6-57 (117 aa).

The N-terminal stretch at 1-19 (MAWAPLLLTLLAHCTGSWA) is a signal peptide. The tract at residues 20–44 (NFMLTQPHSVSESPGKTVTISCTGS) is framework-1. Residues 20–117 (NFMLTQPHSV…YYCQSYDSSN (98 aa)) enclose the Ig-like domain. Cys41 and Cys110 form a disulfide bridge. The segment at 45 to 52 (SGSIASNY) is complementarity-determining-1. Residues 53 to 69 (VQWYQQRPGSAPTTVIY) are framework-2. Residues 65 to 97 (TTVIYEDNQRPSGVPDRFSGSIDSSSNSASLTI) form a disordered region. The complementarity-determining-2 stretch occupies residues 70 to 72 (EDN). The tract at residues 73–110 (QRPSGVPDRFSGSIDSSSNSASLTISGLKTEDEADYYC) is framework-3. Positions 83–97 (SGSIDSSSNSASLTI) are enriched in low complexity. The interval 111–117 (QSYDSSN) is complementarity-determining-3.

As to quaternary structure, immunoglobulins are composed of two identical heavy chains and two identical light chains; disulfide-linked.

The protein resides in the secreted. The protein localises to the cell membrane. Functionally, v region of the variable domain of immunoglobulin light chains that participates in the antigen recognition. Immunoglobulins, also known as antibodies, are membrane-bound or secreted glycoproteins produced by B lymphocytes. In the recognition phase of humoral immunity, the membrane-bound immunoglobulins serve as receptors which, upon binding of a specific antigen, trigger the clonal expansion and differentiation of B lymphocytes into immunoglobulins-secreting plasma cells. Secreted immunoglobulins mediate the effector phase of humoral immunity, which results in the elimination of bound antigens. The antigen binding site is formed by the variable domain of one heavy chain, together with that of its associated light chain. Thus, each immunoglobulin has two antigen binding sites with remarkable affinity for a particular antigen. The variable domains are assembled by a process called V-(D)-J rearrangement and can then be subjected to somatic hypermutations which, after exposure to antigen and selection, allow affinity maturation for a particular antigen. The protein is Immunoglobulin lambda variable 6-57 of Homo sapiens (Human).